We begin with the raw amino-acid sequence, 146 residues long: Ribonuclease H (146 aa).

In terms of domain architecture, RNase H type-1 spans M1 to E141. The Mg(2+) site is built by D9, E47, D69, and D133. The interval H123–R146 is disordered. Residues G125 to R146 show a composition bias toward basic and acidic residues.

This sequence belongs to the RNase H family. As to quaternary structure, monomer. The cofactor is Mg(2+).

The protein resides in the cytoplasm. The catalysed reaction is Endonucleolytic cleavage to 5'-phosphomonoester.. Its function is as follows. Endonuclease that specifically degrades the RNA of RNA-DNA hybrids. The chain is Ribonuclease H from Agrobacterium fabrum (strain C58 / ATCC 33970) (Agrobacterium tumefaciens (strain C58)).